A 502-amino-acid polypeptide reads, in one-letter code: N-fatty-acyl-amino acid synthase/hydrolase PM20D1 (502 aa).

Positions 1–25 are cleaved as a signal peptide; that stretch reads MAQRCVCVLALVAMLLLVFPTVSRS. H125 lines the Zn(2+) pocket. The active site involves D127. D157 lines the Zn(2+) pocket. E191 serves as the catalytic Proton acceptor. Residues E192 and D217 each contribute to the Zn(2+) site. N252 carries N-linked (GlcNAc...) asparagine glycosylation. H464 is a Zn(2+) binding site.

The protein belongs to the peptidase M20A family. The cofactor is Zn(2+).

Its subcellular location is the secreted. The catalysed reaction is an N-acyl-L-amino acid + H2O = an L-alpha-amino acid + a carboxylate. The enzyme catalyses an N-acyl-aromatic L-alpha-amino acid + H2O = an aromatic L-alpha-amino acid + a carboxylate. It catalyses the reaction L-phenylalanine + (9Z)-octadecenoate = N-(9Z-octadecenoyl)-L-phenylalanine + H2O. It carries out the reaction N-(9Z-octadecenoyl)-L-leucine + H2O = L-leucine + (9Z)-octadecenoate. The catalysed reaction is N-(5Z,8Z,11Z,14Z)-eicosatetraenoyl-glycine + H2O = (5Z,8Z,11Z,14Z)-eicosatetraenoate + glycine. The enzyme catalyses N-hexadecanoyl-L-phenylalanine + H2O = hexadecanoate + L-phenylalanine. It catalyses the reaction N-octadecanoyl-L-phenylalanine + H2O = octadecanoate + L-phenylalanine. It carries out the reaction N-(4Z,7Z,10Z,13Z,16Z,19Z-docosahexaenoyl)-L-phenylalanine + H2O = (4Z,7Z,10Z,13Z,16Z,19Z)-docosahexaenoate + L-phenylalanine. The catalysed reaction is N-(9Z-octadecenoyl)-L-asparagine + H2O = L-asparagine + (9Z)-octadecenoate. The enzyme catalyses (9Z)-octadecenoate + glycine = N-(9Z-octadecenoyl)glycine + H2O. It catalyses the reaction N-(9Z-octadecenoyl)-L-lysine + H2O = L-lysine + (9Z)-octadecenoate. It carries out the reaction N-(9Z-octadecenoyl)-L-methionine + H2O = (9Z)-octadecenoate + L-methionine. The catalysed reaction is N-(9Z-octadecenoyl)-L-serine + H2O = L-serine + (9Z)-octadecenoate. The enzyme catalyses N-(9Z-octadecenoyl)-L-tryptophan + H2O = L-tryptophan + (9Z)-octadecenoate. It catalyses the reaction N-(9Z-octadecenoyl)-L-tyrosine + H2O = L-tyrosine + (9Z)-octadecenoate. It carries out the reaction N-(9Z-octadecenoyl)-L-glutamine + H2O = L-glutamine + (9Z)-octadecenoate. The catalysed reaction is N-(5Z,8Z,11Z,14Z-eicosatetraenoyl)-L-serine + H2O = (5Z,8Z,11Z,14Z)-eicosatetraenoate + L-serine. The enzyme catalyses (5Z,8Z,11Z,14Z)-eicosatetraenoate + L-phenylalanine = N-(5Z,8Z,11Z,14Z-eicosatetraenoyl)-L-phenylalanine + H2O. Its pathway is amino-acid metabolism. The protein operates within energy metabolism. It functions in the pathway lipid metabolism; fatty acid metabolism. With respect to regulation, lipoproteins are powerful coactivators of PM20D1 activity in vitro and NAA biosynthesis in vivo. Functionally, secreted enzyme that regulates the endogenous N-fatty acyl amino acid (NAAs) tissue and circulating levels by functioning as a bidirectional NAA synthase/hydrolase. It condenses free fatty acids and free amino acids to generate NAAs and bidirectionally catalyzes the reverse hydrolysis reaction. Some of these NAAs stimulate oxidative metabolism via mitochondrial uncoupling, increasing energy expenditure in a UPC1-independent manner. Thereby, this secreted protein may indirectly regulate whole body energy expenditure. PM20D1 circulates in tight association with both low- and high-density (LDL and HDL,respectively) lipoprotein particles. This chain is N-fatty-acyl-amino acid synthase/hydrolase PM20D1, found in Homo sapiens (Human).